The chain runs to 365 residues: Flavone synthase (365 aa).

Residues His-76, His-218, Asp-220, and His-276 each coordinate Fe cation. The region spanning 194–295 is the Fe2OG dioxygenase domain; it reads MEQKVLINYY…RLSIATFQNP (102 aa). The interval 345-365 is disordered; it reads RLQDEKAKLEMKSKSADENLA.

This sequence belongs to the iron/ascorbate-dependent oxidoreductase family. Fe cation is required as a cofactor. Requires L-ascorbate as cofactor.

It localises to the cytoplasm. The catalysed reaction is a flavanone + 2-oxoglutarate + O2 = a flavone + succinate + CO2 + H2O. Its pathway is secondary metabolite biosynthesis; flavonoid biosynthesis. Its function is as follows. Involved in the conversion of naringenin to apigenin. Acts via a direct 2,3-desaturation of flavanones instead of a sequential hydroxylation/dehydratation mechanism. In Petroselinum crispum (Parsley), this protein is Flavone synthase (FNSI).